The chain runs to 462 residues: Protein Tube (462 aa).

A Death domain is found at 27–152; sequence YSRNTELRRV…SAADFVALDF (126 aa). The tract at residues 218-265 is disordered; the sequence is RDKSVPQPSGNTPPIAPPRRQQRSTTNSNFATLTGTGTTSTTIPNVPN. Over residues 249 to 259 the composition is skewed to low complexity; sequence TLTGTGTTSTT. 2 tandem repeats follow at residues 262–269 and 286–293. The 5 X approximate repeats stretch occupies residues 262-460; sequence NVPNLTILNP…ACNIPDLSEL (199 aa). The span at 301-317 shows a compositional bias: polar residues; it reads RATVSDNPSNRTSSTDP. The disordered stretch occupies residues 301–462; that stretch reads RATVSDNPSN…NIPDLSELQQ (162 aa). Residues 319-326 form repeat 3; the sequence is NIPRITLL. The segment covering 342-354 has biased composition (low complexity); it reads AKASTATTSTASS. Residues 355–367 are compositionally biased toward polar residues; sequence NNLPMISALNISK. Repeat 4 spans residues 356–363; the sequence is NLPMISAL. The span at 368 to 377 shows a compositional bias: basic and acidic residues; that stretch reads GSRETLRPES. Acidic residues predominate over residues 387-403; that stretch reads DDDDDNDGEEDGEEEYP. Low complexity predominate over residues 409-424; the sequence is NLSNSEQQSSNNDSSL. Residues 425-438 show a composition bias toward polar residues; sequence TTVTGTSGDNSFEL. Positions 439-449 are enriched in low complexity; that stretch reads TNDSSSTSNDD. Residues 453-460 form repeat 5; it reads NIPDLSEL.

As to quaternary structure, interacts (via Death domain) with pll (via Death domain). Phosphorylated by pll.

It is found in the cytoplasm. The protein localises to the cell membrane. Functionally, plays an essential role in the Tl receptor signaling pathway that establishes embryonic dorsoventral polarity; the signal directs import of dl into ventral and ventrolateral nuclei, thereby establishing dorsoventral polarity. Tub recruits pll to the plasma membrane and protein-protein interaction activates pll. Also has a role in pupal pattern formation. The sequence is that of Protein Tube (tub) from Drosophila melanogaster (Fruit fly).